Reading from the N-terminus, the 600-residue chain is MIQLSWSSIILESGNVNDYEVVYPQKVPALLKGGVQNPQPETKYEDTMQYEFQVNGEPVVLHLERNKGLFSEDYTETHYAPDGREITTSPPVQDHCYYHGYFQNEADSSAVISACDGLKGHFKLQGEIYFIEPLKISDSEAHAIYKDENVEEEDETPKICGVTDTTWESDEPIKKTSLLTNTPEQDRYLQAEKYIEFYMVVDNIMYRHYKRNQLVIKRKVYEMINTMNMIYRRLNFHIALIGLEIWSNINEINVQSDVKATLDLFGEWREKKLLPRKRNDNAQLLTGIDFNGTPVGLAYIGSICNPKTSAAVVQDYSKSTRMVAITMAHEMGHNLGMNHDKGFCTCGFNKCVMSTRRTKPAYQFSSCSVREHQRYLLRDRPQCILNKPLSTDIVSPPICGNYFVEVGEECDCGSPADCQSACCNATTCKLQHEAQCDSEECCEKCKFKGAGAECRAAKDDCDLPELCTGQSAECPTDVFQRNGLPCQNNGYCYNGKCPIMTNQCIALRGPGVKVSRDSCFTLNQRTRGCGLCRMEYGRKIPCAAKDVKCGRLFCKKRNSMICNCSISPRDPSYGMVEPGTKCGDGMVCSNRQCVDVKTAY.

The N-terminal stretch at 1–8 (MIQLSWSS) is a signal peptide. Positions 9-179 (IILESGNVND…DEPIKKTSLL (171 aa)) are excised as a propeptide. In terms of domain architecture, Peptidase M12B spans 193–388 (KYIEFYMVVD…DRPQCILNKP (196 aa)). Glu196 and Asp280 together coordinate Ca(2+). Cystine bridges form between Cys304-Cys383, Cys344-Cys367, and Cys346-Cys351. The Zn(2+) site is built by His329, His333, and His339. Ca(2+) is bound by residues Cys383, Asn386, Ile398, Asn401, Phe403, Glu405, Glu408, and Asp411. The Disintegrin domain maps to 396-482 (PPICGNYFVE…ECPTDVFQRN (87 aa)). 14 disulfide bridges follow: Cys399-Cys428, Cys410-Cys423, Cys412-Cys418, Cys422-Cys445, Cys436-Cys442, Cys441-Cys467, Cys454-Cys474, Cys461-Cys492, Cys486-Cys497, Cys504-Cys554, Cys519-Cys562, Cys532-Cys542, Cys549-Cys588, and Cys582-Cys593. Asn424 is a glycosylation site (N-linked (GlcNAc...) asparagine). The short motif at 460–462 (DCD) is the D/ECD-tripeptide element. Ca(2+) contacts are provided by Asp462, Leu463, Glu465, Asp477, and Val478.

It belongs to the venom metalloproteinase (M12B) family. P-III subfamily. P-IIIa sub-subfamily. Monomer. Zn(2+) is required as a cofactor. As to expression, expressed by the venom gland.

It localises to the secreted. Functionally, snake venom zinc metalloproteinase that may cleave complement protein C3 into C3c-like (C3o). This Naja kaouthia (Monocled cobra) protein is Zinc metalloproteinase-disintegrin-like cobrin.